A 153-amino-acid chain; its full sequence is Large ribosomal subunit protein uL15 (153 aa).

Positions 21–41 (RGIGSGKGKTGGRGIKGQKSR) are disordered. Positions 23 to 35 (IGSGKGKTGGRGI) are enriched in gly residues.

It belongs to the universal ribosomal protein uL15 family. As to quaternary structure, part of the 50S ribosomal subunit.

Binds to the 23S rRNA. This chain is Large ribosomal subunit protein uL15, found in Rickettsia rickettsii (strain Iowa).